The following is a 159-amino-acid chain: Transcription elongation factor GreA (159 aa).

This sequence belongs to the GreA/GreB family.

In terms of biological role, necessary for efficient RNA polymerase transcription elongation past template-encoded arresting sites. The arresting sites in DNA have the property of trapping a certain fraction of elongating RNA polymerases that pass through, resulting in locked ternary complexes. Cleavage of the nascent transcript by cleavage factors such as GreA or GreB allows the resumption of elongation from the new 3'terminus. GreA releases sequences of 2 to 3 nucleotides. The sequence is that of Transcription elongation factor GreA from Buchnera aphidicola subsp. Acyrthosiphon pisum (strain APS) (Acyrthosiphon pisum symbiotic bacterium).